The following is a 245-amino-acid chain: UPF0246 protein cgR_1824 (245 aa).

Belongs to the UPF0246 family.

This Corynebacterium glutamicum (strain R) protein is UPF0246 protein cgR_1824.